The following is a 90-amino-acid chain: Small ribosomal subunit protein bS20 (90 aa).

This sequence belongs to the bacterial ribosomal protein bS20 family.

Binds directly to 16S ribosomal RNA. This Mesomycoplasma hyopneumoniae (strain J / ATCC 25934 / NCTC 10110) (Mycoplasma hyopneumoniae) protein is Small ribosomal subunit protein bS20.